The sequence spans 217 residues: Large ribosomal subunit protein uL16 (217 aa).

The protein belongs to the universal ribosomal protein uL16 family. Component of the small ribosomal subunit. Mature ribosomes consist of a small (40S) and a large (60S) subunit. The 40S subunit contains about 33 different proteins and 1 molecule of RNA (18S). The 60S subunit contains about 49 different proteins and 3 molecules of RNA (25S, 5.8S and 5S).

The sequence is that of Large ribosomal subunit protein uL16 (rpl10) from Dictyostelium discoideum (Social amoeba).